Reading from the N-terminus, the 473-residue chain is Putative tyrosine recombinase XerC (473 aa).

The Core-binding (CB) domain occupies 4 to 82 (MTLPELTQEY…HLRTVYRYAM (79 aa)). The Tyr recombinase domain occupies 118 to 305 (RNWLRFLVQE…DYDLMREVMN (188 aa)). Catalysis depends on residues arginine 156, lysine 183, histidine 256, arginine 259, and histidine 283. Residue tyrosine 292 is the O-(3'-phospho-DNA)-tyrosine intermediate of the active site. Over residues 341-352 (SGTELQPATTES) the composition is skewed to polar residues. The segment at 341-365 (SGTELQPATTESSEAKKADDTASNP) is disordered.

Belongs to the 'phage' integrase family.

The protein resides in the cytoplasm. Functionally, site-specific tyrosine recombinase, which acts by catalyzing the cutting and rejoining of the recombining DNA molecules. This chain is Putative tyrosine recombinase XerC, found in Pseudomonas syringae.